Consider the following 585-residue polypeptide: Bestrophin-1 (585 aa).

Over 1-31 (MTITYTSQVANARLGSFSRLLLCWRGSIYKL) the chain is Cytoplasmic. Alanine 10 contacts Ca(2+). The chain crosses the membrane as a helical span at residues 32–51 (LYGEFLIFLLCYYIIRFIYR). The Extracellular segment spans residues 52–60 (LALTEEQQL). A helical transmembrane segment spans residues 61–82 (MFEKLTLYCDSYIQLIPISFVL). The Cytoplasmic segment spans residues 83–237 (GFYVTLVVTR…DWISIPLVYT (155 aa)). A helical membrane pass occupies residues 238 to 255 (QVVTVAVYSFFLTCLVGR). Topologically, residues 256 to 274 (QFLNPAKAYPGHELDLVVP) are extracellular. Residues 275 to 288 (VFTFLQFFFYVGWL) form a helical membrane-spanning segment. Topologically, residues 289-585 (KVAEQLINPF…ALENRDEAHS (297 aa)) are cytoplasmic. The Ca(2+) site is built by glutamine 293, asparagine 296, aspartate 301, and aspartate 304. The segment at 346-379 (PYTAASAQFRRASFMGSTFNISLNKEEMEFQPNQ) is auto-inhibitory segment.

Belongs to the anion channel-forming bestrophin (TC 1.A.46) family. Calcium-sensitive chloride channel subfamily. Interacts with YWHAG; this interaction promotes the ligand-gated L-glutamate channel activity leading to the positive regulation of NMDA glutamate receptor activity through the L-glutamate secretion. Predominantly expressed in the basolateral membrane of the retinal pigment epithelium.

The protein resides in the cell membrane. It localises to the basolateral cell membrane. It carries out the reaction chloride(in) = chloride(out). The enzyme catalyses hydrogencarbonate(in) = hydrogencarbonate(out). The catalysed reaction is 4-aminobutanoate(in) = 4-aminobutanoate(out). It catalyses the reaction L-glutamate(out) = L-glutamate(in). With respect to regulation, inactivated by sulfhydryl-reactive agents. Its function is as follows. Ligand-gated anion channel that allows the movement of anions across cell membranes when activated by calcium (Ca2+). Allows the movement of chloride and hydrogencarbonate. Found in a partially open conformation leading to significantly smaller chloride movement. Upon F2R/PAR-1 activation, the sequestered calcium is released into the cytosol of astrocytes, leading to the (Ca2+)-dependent release of L-glutamate into the synaptic cleft that targets the neuronal postsynaptic GRIN2A/NMDAR receptor resulting in the synaptic plasticity regulation. Upon activation of the norepinephrine-alpha-1 adrenergic receptor signaling pathway, transports as well D-serine than L-glutamate in a (Ca2+)-dependent manner, leading to activation of adjacent NMDAR receptors and therefore regulates the heterosynaptic long-term depression and metaplasticity during initial memory acquisition. Releases the 4-aminobutanoate neurotransmitter in a (Ca2+)-dependent manner, and participates in its tonic release from cerebellar glial cells. The polypeptide is Bestrophin-1 (Homo sapiens (Human)).